Consider the following 241-residue polypeptide: Probable transcriptional regulatory protein stu0195 (241 aa).

This sequence belongs to the TACO1 family. YeeN subfamily.

The protein resides in the cytoplasm. The sequence is that of Probable transcriptional regulatory protein stu0195 from Streptococcus thermophilus (strain ATCC BAA-250 / LMG 18311).